The following is a 232-amino-acid chain: Ubiquinone biosynthesis O-methyltransferase (232 aa).

S-adenosyl-L-methionine is bound by residues R36, G55, D76, and L120.

Belongs to the methyltransferase superfamily. UbiG/COQ3 family.

It carries out the reaction a 3-demethylubiquinol + S-adenosyl-L-methionine = a ubiquinol + S-adenosyl-L-homocysteine + H(+). The catalysed reaction is a 3-(all-trans-polyprenyl)benzene-1,2-diol + S-adenosyl-L-methionine = a 2-methoxy-6-(all-trans-polyprenyl)phenol + S-adenosyl-L-homocysteine + H(+). The protein operates within cofactor biosynthesis; ubiquinone biosynthesis. Functionally, O-methyltransferase that catalyzes the 2 O-methylation steps in the ubiquinone biosynthetic pathway. This Stutzerimonas stutzeri (strain A1501) (Pseudomonas stutzeri) protein is Ubiquinone biosynthesis O-methyltransferase.